A 363-amino-acid chain; its full sequence is Fructose-bisphosphate aldolase C (363 aa).

Residues arginine 56 and lysine 147 each coordinate substrate. The active-site Schiff-base intermediate with dihydroxyacetone-P is the lysine 230.

This sequence belongs to the class I fructose-bisphosphate aldolase family. Homotetramer. As to expression, expressed in brain but not in liver or muscle.

It catalyses the reaction beta-D-fructose 1,6-bisphosphate = D-glyceraldehyde 3-phosphate + dihydroxyacetone phosphate. The protein operates within carbohydrate degradation; glycolysis; D-glyceraldehyde 3-phosphate and glycerone phosphate from D-glucose: step 4/4. This is Fructose-bisphosphate aldolase C (aldoc) from Carassius auratus (Goldfish).